The chain runs to 318 residues: Ferredoxin--NADP reductase (318 aa).

Asp-33, Gln-41, Tyr-46, Val-84, Phe-115, Asp-276, and Thr-316 together coordinate FAD.

It belongs to the ferredoxin--NADP reductase type 2 family. As to quaternary structure, homodimer. Requires FAD as cofactor.

The catalysed reaction is 2 reduced [2Fe-2S]-[ferredoxin] + NADP(+) + H(+) = 2 oxidized [2Fe-2S]-[ferredoxin] + NADPH. The sequence is that of Ferredoxin--NADP reductase from Lactobacillus johnsonii (strain CNCM I-12250 / La1 / NCC 533).